Consider the following 807-residue polypeptide: Poly-beta-1,6-N-acetyl-D-glucosamine export protein (807 aa).

The first 26 residues, 1–26 (MYSSSRKRCPKTKWALKLLTAAFLAA), serve as a signal peptide directing secretion. TPR repeat units lie at residues 98-131 (ARGY…EPQN), 165-198 (KANL…NAST), and 279-311 (RIQV…GQII).

It is found in the cell outer membrane. Exports the biofilm adhesin polysaccharide poly-beta-1,6-N-acetyl-D-glucosamine (PGA) across the outer membrane. The PGA transported seems to be partially N-deacetylated since N-deacetylation of PGA by PgaB is needed for PGA export through the PgaA porin. This Escherichia coli O157:H7 protein is Poly-beta-1,6-N-acetyl-D-glucosamine export protein (pgaA).